The primary structure comprises 1028 residues: Golgin subfamily A member 2 (1028 aa).

The interval 1 to 112 (MADQNRQIKL…NRPLSSTESL (112 aa)) is disordered. Residues 40–60 (KGDQTDAPADRRSPENERVDV) are compositionally biased toward basic and acidic residues. A compositionally biased stretch (polar residues) spans 74 to 87 (NPASAINTDNSAPQ). Coiled-coil stretches lie at residues 162 to 200 (NTQL…EQGA), 233 to 388 (ARQK…YAVQ), 414 to 690 (RDST…LLNG), 738 to 769 (LSRV…LTAL), and 799 to 840 (HEAL…LSGE). The disordered stretch occupies residues 259–280 (RTLSSVSTQQKQHERHNKELEK). The disordered stretch occupies residues 756–791 (RRIHQDTRQQLTALSHDHHHHHHHEPHSTCAETDGS). Positions 944 to 981 (AMDVSSSPQSSTAEIQSQSSERPAADPISSPSLRPQED) are disordered. The span at 945-964 (MDVSSSPQSSTAEIQSQSSE) shows a compositional bias: polar residues.

It belongs to the GOLGA2 family.

Its subcellular location is the golgi apparatus. It localises to the cis-Golgi network membrane. It is found in the endoplasmic reticulum-Golgi intermediate compartment membrane. The protein resides in the cytoplasm. The protein localises to the cytoskeleton. Its subcellular location is the spindle pole. In terms of biological role, peripheral membrane component of the cis-Golgi stack that acts as a membrane skeleton that maintains the structure of the Golgi apparatus, and as a vesicle thether that facilitates vesicle fusion to the Golgi membrane. Required for normal protein transport from the endoplasmic reticulum to the Golgi apparatus and the cell membrane. Plays a central role in mitotic Golgi disassembly. Also plays a key role in spindle pole assembly and centrosome organization. It probably promotes mitotic spindle pole assembly by activating assembly factors to nucleate microtubules around the Golgi and capture them to couple mitotic membranes to the spindle. Also required for the Golgi ribbon formation and glycosylation of membrane and secretory proteins. The chain is Golgin subfamily A member 2 from Danio rerio (Zebrafish).